Reading from the N-terminus, the 228-residue chain is Lipoprotein-releasing system ATP-binding protein LolD (228 aa).

In terms of domain architecture, ABC transporter spans 6-228; the sequence is IKCINLNKSY…ENNQIFNYES (223 aa). 42-49 contacts ATP; it reads GKSGSGKT.

It belongs to the ABC transporter superfamily. Lipoprotein translocase (TC 3.A.1.125) family.

It is found in the cell inner membrane. Functionally, usually LolD forms an ABC transporter complex with LolC and LolE involved in the translocation of lipoprotein, in an ATP-dependent manner. However, LolE is certainly not functional as it is frameshifted. The sequence is that of Lipoprotein-releasing system ATP-binding protein LolD from Buchnera aphidicola subsp. Acyrthosiphon pisum (strain APS) (Acyrthosiphon pisum symbiotic bacterium).